A 76-amino-acid polypeptide reads, in one-letter code: Neuromacin-like protein (76 aa).

Cystine bridges form between C18–C25, C40–C44, C54–C61, and C72–C74.

It belongs to the macin family.

It localises to the secreted. This chain is Neuromacin-like protein, found in Aplysia californica (California sea hare).